Consider the following 364-residue polypeptide: 3'(2'),5'-bisphosphate nucleotidase 1 (364 aa).

Residue Asp54 is the Proton acceptor of the active site. Residues Glu77, Asp141, Ile143, and Asp144 each contribute to the Mg(2+) site. The Proton acceptor role is filled by Thr146. Thr146, His243, Ser272, Lys275, Arg289, and Asp302 together coordinate adenosine 3',5'-bisphosphate. Positions 243, 272, 275, 289, and 302 each coordinate AMP. Position 302 (Asp302) interacts with Mg(2+).

The protein belongs to the inositol monophosphatase superfamily. Requires Mg(2+) as cofactor.

It catalyses the reaction 3'-phosphoadenylyl sulfate + H2O = adenosine 5'-phosphosulfate + phosphate. The enzyme catalyses adenosine 3',5'-bisphosphate + H2O = AMP + phosphate. The catalysed reaction is adenosine 2',5'-bisphosphate + H2O = AMP + phosphate. Functionally, phosphatase that converts adenosine 3'-phosphate 5'-phosphosulfate (PAPS) to adenosine 5'-phosphosulfate (APS) and 3'(2')-phosphoadenosine 5'-phosphate (PAP) to AMP. Regulates the flux of sulfur in the sulfur-activation pathway by converting PAPS to APS. Involved in salt tolerance. This chain is 3'(2'),5'-bisphosphate nucleotidase 1 (HAL21), found in Candida albicans (strain WO-1) (Yeast).